The primary structure comprises 626 residues: Chaperone protein HtpG (626 aa).

Positions 1 to 338 (MTANKNQKKT…SNDLPLNVSR (338 aa)) are a; substrate-binding. Residues 339 to 553 (EILQDHKLVY…SNEMSTQMAK (215 aa)) are b. Residues 554 to 626 (LFSAAGQTVP…ARINDLLINN (73 aa)) form a c region.

Belongs to the heat shock protein 90 family. Homodimer.

The protein resides in the cytoplasm. Molecular chaperone. Has ATPase activity. The chain is Chaperone protein HtpG from Buchnera aphidicola subsp. Baizongia pistaciae (strain Bp).